Here is a 185-residue protein sequence, read N- to C-terminus: Ribosome-recycling factor (185 aa).

The segment at 136–161 (MDSLKTDEKKGEIGEDDRKRRETEVQ) is disordered.

It belongs to the RRF family.

It is found in the cytoplasm. Functionally, responsible for the release of ribosomes from messenger RNA at the termination of protein biosynthesis. May increase the efficiency of translation by recycling ribosomes from one round of translation to another. This Rhizorhabdus wittichii (strain DSM 6014 / CCUG 31198 / JCM 15750 / NBRC 105917 / EY 4224 / RW1) (Sphingomonas wittichii) protein is Ribosome-recycling factor.